Consider the following 413-residue polypeptide: CinA-like protein (413 aa).

It belongs to the CinA family.

This is CinA-like protein from Desulfotalea psychrophila (strain LSv54 / DSM 12343).